Consider the following 92-residue polypeptide: MKFEAVVRTELGKGASRRLRHAGKFPAVIYGGEAAAVAIELVHADVINQMDKPEFYETITLVIDGAEVKVKPQDVQRHAFKPKVEHMDFIRI.

It belongs to the bacterial ribosomal protein bL25 family. Part of the 50S ribosomal subunit; part of the 5S rRNA/L5/L18/L25 subcomplex. Contacts the 5S rRNA. Binds to the 5S rRNA independently of L5 and L18.

Functionally, this is one of the proteins that binds to the 5S RNA in the ribosome where it forms part of the central protuberance. In Vibrio atlanticus (strain LGP32) (Vibrio splendidus (strain Mel32)), this protein is Large ribosomal subunit protein bL25.